Here is a 203-residue protein sequence, read N- to C-terminus: Proteasome subunit beta 2 (203 aa).

Residues 1-9 (MGEEVSIGA) constitute a propeptide, removed in mature form; by autocatalysis. Catalysis depends on threonine 10, which acts as the Nucleophile.

It belongs to the peptidase T1B family. As to quaternary structure, the 20S proteasome core is composed of 14 alpha and 14 beta subunits that assemble into four stacked heptameric rings, resulting in a barrel-shaped structure. The two inner rings, each composed of seven catalytic beta subunits, are sandwiched by two outer rings, each composed of seven alpha subunits. The catalytic chamber with the active sites is on the inside of the barrel. Has a gated structure, the ends of the cylinder being occluded by the N-termini of the alpha-subunits. Is capped at one or both ends by the proteasome regulatory ATPase, PAN.

It localises to the cytoplasm. It catalyses the reaction Cleavage of peptide bonds with very broad specificity.. With respect to regulation, the formation of the proteasomal ATPase PAN-20S proteasome complex, via the docking of the C-termini of PAN into the intersubunit pockets in the alpha-rings, triggers opening of the gate for substrate entry. Interconversion between the open-gate and close-gate conformations leads to a dynamic regulation of the 20S proteasome proteolysis activity. Its function is as follows. Component of the proteasome core, a large protease complex with broad specificity involved in protein degradation. The sequence is that of Proteasome subunit beta 2 from Pyrobaculum calidifontis (strain DSM 21063 / JCM 11548 / VA1).